Here is a 92-residue protein sequence, read N- to C-terminus: Large ribosomal subunit protein bL28 (92 aa).

It belongs to the bacterial ribosomal protein bL28 family.

This chain is Large ribosomal subunit protein bL28, found in Borrelia garinii subsp. bavariensis (strain ATCC BAA-2496 / DSM 23469 / PBi) (Borreliella bavariensis).